The following is a 171-amino-acid chain: MAGKSSYDYEELLACARGELFGEGNAQLPYPPMLMFDRITEISETGGAFDKGFIRAEFDIKPDLWFFACHFIGNPIMPGCLGLDALWQLTGFYLGWLGEPGKGMALSTGEVKFKGMVTPSVKKVEYGVDFKRVMRGRLVLGIADGWMKADGEPIYAATDLKVGLSKQSAVA.

Residue H70 is part of the active site.

It belongs to the thioester dehydratase family. FabA subfamily. Homodimer.

It localises to the cytoplasm. The enzyme catalyses a (3R)-hydroxyacyl-[ACP] = a (2E)-enoyl-[ACP] + H2O. It catalyses the reaction (3R)-hydroxydecanoyl-[ACP] = (2E)-decenoyl-[ACP] + H2O. The catalysed reaction is (2E)-decenoyl-[ACP] = (3Z)-decenoyl-[ACP]. Its pathway is lipid metabolism; fatty acid biosynthesis. Functionally, necessary for the introduction of cis unsaturation into fatty acids. Catalyzes the dehydration of (3R)-3-hydroxydecanoyl-ACP to E-(2)-decenoyl-ACP and then its isomerization to Z-(3)-decenoyl-ACP. Can catalyze the dehydratase reaction for beta-hydroxyacyl-ACPs with saturated chain lengths up to 16:0, being most active on intermediate chain length. The polypeptide is 3-hydroxydecanoyl-[acyl-carrier-protein] dehydratase (Mesorhizobium japonicum (strain LMG 29417 / CECT 9101 / MAFF 303099) (Mesorhizobium loti (strain MAFF 303099))).